Consider the following 914-residue polypeptide: WAG22 antigen (914 aa).

One can recognise a PE domain in the interval methionine 1 to alanine 93. Disordered regions lie at residues glycine 412–alanine 431 and alanine 895–threonine 914. The segment covering alanine 895–valine 904 has biased composition (gly residues).

Belongs to the mycobacterial PE family. PGRS subfamily.

This Mycobacterium bovis (strain ATCC BAA-935 / AF2122/97) protein is WAG22 antigen (wag22).